The following is a 475-amino-acid chain: UDP-N-acetylmuramate--L-alanine ligase (475 aa).

Residue Gly125–Thr131 coordinates ATP.

This sequence belongs to the MurCDEF family.

It is found in the cytoplasm. The enzyme catalyses UDP-N-acetyl-alpha-D-muramate + L-alanine + ATP = UDP-N-acetyl-alpha-D-muramoyl-L-alanine + ADP + phosphate + H(+). It participates in cell wall biogenesis; peptidoglycan biosynthesis. Functionally, cell wall formation. The chain is UDP-N-acetylmuramate--L-alanine ligase from Actinobacillus pleuropneumoniae serotype 5b (strain L20).